The following is a 340-amino-acid chain: DNA-directed RNA polymerase subunit alpha (340 aa).

Positions 1 to 233 (MIQDEIPIPV…DLFIIFLNME (233 aa)) are alpha N-terminal domain (alpha-NTD). The tract at residues 264-340 (AKEVAFKQIF…QLPKDQFNIS (77 aa)) is alpha C-terminal domain (alpha-CTD).

It belongs to the RNA polymerase alpha chain family. In plastids the minimal PEP RNA polymerase catalytic core is composed of four subunits: alpha, beta, beta', and beta''. When a (nuclear-encoded) sigma factor is associated with the core the holoenzyme is formed, which can initiate transcription.

The protein localises to the plastid. The protein resides in the chloroplast. It catalyses the reaction RNA(n) + a ribonucleoside 5'-triphosphate = RNA(n+1) + diphosphate. DNA-dependent RNA polymerase catalyzes the transcription of DNA into RNA using the four ribonucleoside triphosphates as substrates. This Psilotum nudum (Whisk fern) protein is DNA-directed RNA polymerase subunit alpha.